Consider the following 189-residue polypeptide: MKTGKELKPGTVIRLENDPWLVQKAEFTKSGRNSAIMKTKLKNLLTGYKTEIVYSADDKLDDVILDRKEATLSFISGDTYTFMDTTDYTMYELNAEDIESVLPFVEEGMTDVCEAVFFEDRLVSVELPTTIVRQVDYTEGSARGDTSGKVMKPAKLKNGTELSVADFIEIGDMIEIDTREGGSYKGRAK.

Belongs to the elongation factor P family.

It is found in the cytoplasm. The protein operates within protein biosynthesis; polypeptide chain elongation. In terms of biological role, involved in peptide bond synthesis. Stimulates efficient translation and peptide-bond synthesis on native or reconstituted 70S ribosomes in vitro. Probably functions indirectly by altering the affinity of the ribosome for aminoacyl-tRNA, thus increasing their reactivity as acceptors for peptidyl transferase. The sequence is that of Elongation factor P from Pseudomonas savastanoi pv. phaseolicola (strain 1448A / Race 6) (Pseudomonas syringae pv. phaseolicola (strain 1448A / Race 6)).